The following is a 198-amino-acid chain: Molybdenum cofactor guanylyltransferase (198 aa).

GTP contacts are provided by residues 14–16 (LAG), Lys27, Asp73, and Asp103. Asp103 contacts Mg(2+).

The protein belongs to the MobA family. Monomer. The cofactor is Mg(2+).

It is found in the cytoplasm. The catalysed reaction is Mo-molybdopterin + GTP + H(+) = Mo-molybdopterin guanine dinucleotide + diphosphate. Functionally, transfers a GMP moiety from GTP to Mo-molybdopterin (Mo-MPT) cofactor (Moco or molybdenum cofactor) to form Mo-molybdopterin guanine dinucleotide (Mo-MGD) cofactor. The protein is Molybdenum cofactor guanylyltransferase of Pseudomonas paraeruginosa (strain DSM 24068 / PA7) (Pseudomonas aeruginosa (strain PA7)).